Reading from the N-terminus, the 295-residue chain is Bifunctional protein FolD (295 aa).

NADP(+)-binding positions include 166–168 (GRS), S191, and I232.

This sequence belongs to the tetrahydrofolate dehydrogenase/cyclohydrolase family. Homodimer.

It carries out the reaction (6R)-5,10-methylene-5,6,7,8-tetrahydrofolate + NADP(+) = (6R)-5,10-methenyltetrahydrofolate + NADPH. The enzyme catalyses (6R)-5,10-methenyltetrahydrofolate + H2O = (6R)-10-formyltetrahydrofolate + H(+). It functions in the pathway one-carbon metabolism; tetrahydrofolate interconversion. Catalyzes the oxidation of 5,10-methylenetetrahydrofolate to 5,10-methenyltetrahydrofolate and then the hydrolysis of 5,10-methenyltetrahydrofolate to 10-formyltetrahydrofolate. The protein is Bifunctional protein FolD of Rhodopseudomonas palustris (strain BisA53).